The sequence spans 626 residues: Membrane protein insertase YidC (626 aa).

Transmembrane regions (helical) follow at residues 8-28 (LILA…LFPP), 399-419 (MGLA…PLAY), 469-489 (LPIL…FVTL), 527-547 (SIMA…SMWL), and 563-583 (IFAW…SGLL).

The protein belongs to the OXA1/ALB3/YidC family. Type 1 subfamily. Interacts with the Sec translocase complex via SecD. Specifically interacts with transmembrane segments of nascent integral membrane proteins during membrane integration.

Its subcellular location is the cell inner membrane. Functionally, required for the insertion and/or proper folding and/or complex formation of integral membrane proteins into the membrane. Involved in integration of membrane proteins that insert both dependently and independently of the Sec translocase complex, as well as at least some lipoproteins. Aids folding of multispanning membrane proteins. This chain is Membrane protein insertase YidC, found in Jannaschia sp. (strain CCS1).